Here is a 1088-residue protein sequence, read N- to C-terminus: Tyrocidine synthase 1 (1088 aa).

Residues 528 to 602 (PPRTETESIL…QVALFVKSTT (75 aa)) enclose the Carrier domain. S563 is modified (O-(pantetheine 4'-phosphoryl)serine).

The protein belongs to the ATP-dependent AMP-binding enzyme family. Large multienzyme complex of TycA, TycB and TycC. Requires pantetheine 4'-phosphate as cofactor.

It carries out the reaction L-phenylalanine + ATP + H2O = D-phenylalanine + AMP + diphosphate + H(+). Its pathway is antibiotic biosynthesis; tyrocidine biosynthesis. Its function is as follows. In the first step of peptide synthesis this enzyme activates phenylalanine and racemizes it to the D-isomer. This is Tyrocidine synthase 1 (tycA) from Brevibacillus parabrevis.